The sequence spans 228 residues: 3-dehydroquinate dehydratase (228 aa).

3-dehydroquinate is bound by residues S26, 51-53 (EIR), and R84. The Proton donor/acceptor role is filled by H127. The Schiff-base intermediate with substrate role is filled by K150. Residues R190, T209, and Q213 each coordinate 3-dehydroquinate.

This sequence belongs to the type-I 3-dehydroquinase family. Homodimer.

It catalyses the reaction 3-dehydroquinate = 3-dehydroshikimate + H2O. The protein operates within metabolic intermediate biosynthesis; chorismate biosynthesis; chorismate from D-erythrose 4-phosphate and phosphoenolpyruvate: step 3/7. Functionally, involved in the third step of the chorismate pathway, which leads to the biosynthesis of aromatic amino acids. Catalyzes the cis-dehydration of 3-dehydroquinate (DHQ) and introduces the first double bond of the aromatic ring to yield 3-dehydroshikimate. The polypeptide is 3-dehydroquinate dehydratase (Thermoplasma acidophilum (strain ATCC 25905 / DSM 1728 / JCM 9062 / NBRC 15155 / AMRC-C165)).